The primary structure comprises 297 residues: Urease accessory protein UreD 2 (297 aa).

This sequence belongs to the UreD family. In terms of assembly, ureD, UreF and UreG form a complex that acts as a GTP-hydrolysis-dependent molecular chaperone, activating the urease apoprotein by helping to assemble the nickel containing metallocenter of UreC. The UreE protein probably delivers the nickel.

Its subcellular location is the cytoplasm. Its function is as follows. Required for maturation of urease via the functional incorporation of the urease nickel metallocenter. The sequence is that of Urease accessory protein UreD 2 from Methylorubrum populi (strain ATCC BAA-705 / NCIMB 13946 / BJ001) (Methylobacterium populi).